The following is a 115-amino-acid chain: NADH-ubiquinone oxidoreductase chain 3 (115 aa).

A run of 3 helical transmembrane segments spans residues M1–I21, F55–L75, and A87–L107.

It belongs to the complex I subunit 3 family.

The protein resides in the mitochondrion membrane. The catalysed reaction is a ubiquinone + NADH + 5 H(+)(in) = a ubiquinol + NAD(+) + 4 H(+)(out). Its function is as follows. Core subunit of the mitochondrial membrane respiratory chain NADH dehydrogenase (Complex I) that is believed to belong to the minimal assembly required for catalysis. Complex I functions in the transfer of electrons from NADH to the respiratory chain. The immediate electron acceptor for the enzyme is believed to be ubiquinone. This chain is NADH-ubiquinone oxidoreductase chain 3 (MT-ND3), found in Myxine glutinosa (Atlantic hagfish).